We begin with the raw amino-acid sequence, 574 residues long: Pyruvate kinase PKLR (574 aa).

A phosphoserine mark is found at serine 2, serine 19, serine 26, and serine 43. Substrate is bound at residue arginine 116. Residues asparagine 118, serine 120, aspartate 156, and threonine 157 each coordinate K(+). 118–121 serves as a coordination point for ATP; it reads NFSH. Positions 163 and 250 each coordinate ATP. A Phosphoserine modification is found at serine 292. Substrate is bound at residue lysine 313. Glutamate 315 lines the Mn(2+) pocket. Substrate contacts are provided by glycine 338, aspartate 339, and threonine 371. Residue aspartate 339 participates in Mn(2+) binding. Beta-D-fructose 1,6-bisphosphate is bound by residues 475–480, tryptophan 525, arginine 532, and 559–564; these read TTTGRS and RPGSGY.

Belongs to the pyruvate kinase family. In terms of assembly, homotetramer. It depends on Mg(2+) as a cofactor. The cofactor is Mn(2+). K(+) is required as a cofactor.

The catalysed reaction is pyruvate + ATP = phosphoenolpyruvate + ADP + H(+). It participates in carbohydrate degradation; glycolysis; pyruvate from D-glyceraldehyde 3-phosphate: step 5/5. Its activity is regulated as follows. Allosterically activated by fructose 1,6-bisphosphate. Pyruvate kinase that catalyzes the conversion of phosphoenolpyruvate to pyruvate with the synthesis of ATP, and which plays a key role in glycolysis. The protein is Pyruvate kinase PKLR (PKLR) of Homo sapiens (Human).